We begin with the raw amino-acid sequence, 314 residues long: Fibrinogen-like protein 1 (314 aa).

The signal sequence occupies residues 1 to 22; sequence MGEIRSFLLVTIALMMGREIWA. Residues 25–59 are a coiled coil; sequence NSKCLLEQERLRAQVQQLETRVKQQQARIAQLMHE. The region spanning 76–308 is the Fibrinogen C-terminal domain; the sequence is LGGKRQYADC…SVVMKIRPND (233 aa). 2 disulfides stabilise this stretch: Cys85–Cys114 and Cys250–Cys263.

In terms of assembly, homodimer. Interacts (via the Fibrinogen C-terminal domain) with LAG3 (via Ig-like domains 1 and 2).

Its subcellular location is the secreted. Its function is as follows. Immune suppressive molecule that inhibits antigen-specific T-cell activation by acting as a major ligand of LAG3. Responsible for LAG3 T-cell inhibitory function. Binds LAG3 independently from MHC class II (MHC-II). Secreted by, and promotes growth of, hepatocytes. The sequence is that of Fibrinogen-like protein 1 from Mesocricetus auratus (Golden hamster).